The primary structure comprises 342 residues: tRNA N6-adenosine threonylcarbamoyltransferase (342 aa).

Residues His-115 and His-119 each coordinate Fe cation. Substrate-binding positions include 137-141, Asp-170, Gly-183, Asp-187, and Asn-276; that span reads IVSGG. Asp-304 contributes to the Fe cation binding site.

This sequence belongs to the KAE1 / TsaD family. Requires Fe(2+) as cofactor.

It localises to the cytoplasm. It catalyses the reaction L-threonylcarbamoyladenylate + adenosine(37) in tRNA = N(6)-L-threonylcarbamoyladenosine(37) in tRNA + AMP + H(+). Its function is as follows. Required for the formation of a threonylcarbamoyl group on adenosine at position 37 (t(6)A37) in tRNAs that read codons beginning with adenine. Is involved in the transfer of the threonylcarbamoyl moiety of threonylcarbamoyl-AMP (TC-AMP) to the N6 group of A37, together with TsaE and TsaB. TsaD likely plays a direct catalytic role in this reaction. The sequence is that of tRNA N6-adenosine threonylcarbamoyltransferase from Staphylococcus saprophyticus subsp. saprophyticus (strain ATCC 15305 / DSM 20229 / NCIMB 8711 / NCTC 7292 / S-41).